The chain runs to 145 residues: uncharacterized protein (145 aa).

Residues Ile97–Ile117 traverse the membrane as a helical segment.

It is found in the membrane. This is an uncharacterized protein from Methanocaldococcus jannaschii (strain ATCC 43067 / DSM 2661 / JAL-1 / JCM 10045 / NBRC 100440) (Methanococcus jannaschii).